The chain runs to 263 residues: Metaxin-2 (263 aa).

Serine 2 bears the N-acetylserine mark.

It belongs to the metaxin family. Interacts with MTX1/metaxin-1. Associates with the mitochondrial contact site and cristae organizing system (MICOS) complex, composed of at least MICOS10/MIC10, CHCHD3/MIC19, CHCHD6/MIC25, APOOL/MIC27, IMMT/MIC60, APOO/MIC23/MIC26 and QIL1/MIC13. This complex was also known under the names MINOS or MitOS complex. The MICOS complex associates with mitochondrial outer membrane proteins SAMM50, MTX1 and MTX2 (together described as components of the mitochondrial outer membrane sorting assembly machinery (SAM) complex) and DNAJC11, mitochondrial inner membrane protein TMEM11 and with HSPA9. The MICOS and SAM complexes together with DNAJC11 are part of a large protein complex spanning both membranes termed the mitochondrial intermembrane space bridging (MIB) complex.

The protein localises to the mitochondrion outer membrane. It is found in the mitochondrion. Functionally, involved in transport of proteins into the mitochondrion. This Homo sapiens (Human) protein is Metaxin-2 (MTX2).